A 536-amino-acid chain; its full sequence is Casein kinase I homolog RAG8 (536 aa).

A compositionally biased stretch (polar residues) spans His26–Ser42. The segment at His26–Asp68 is disordered. Residues Gly43–Ser65 show a composition bias toward low complexity. The Protein kinase domain occupies Tyr77–Met361. ATP-binding positions include Ile83–Leu91 and Lys106. Asp196 serves as the catalytic Proton acceptor. 2 stretches are compositionally biased toward polar residues: residues Asn407–Ser420 and Asp427–Pro436. The disordered stretch occupies residues Asn407–Asn524. Low complexity-rich tracts occupy residues Gln437–Gln453 and Ala463–Gln514. 2 S-palmitoyl cysteine lipidation sites follow: Cys535 and Cys536.

It belongs to the protein kinase superfamily. CK1 Ser/Thr protein kinase family. Casein kinase I subfamily.

It carries out the reaction L-seryl-[protein] + ATP = O-phospho-L-seryl-[protein] + ADP + H(+). It catalyses the reaction L-threonyl-[protein] + ATP = O-phospho-L-threonyl-[protein] + ADP + H(+). Casein kinases are operationally defined by their preferential utilization of acidic proteins such as caseins as substrates. The chain is Casein kinase I homolog RAG8 (RAG8) from Kluyveromyces lactis (strain ATCC 8585 / CBS 2359 / DSM 70799 / NBRC 1267 / NRRL Y-1140 / WM37) (Yeast).